The following is a 713-amino-acid chain: Ribosomal RNA large subunit methyltransferase K/L (713 aa).

A THUMP domain is found at 43–154 (LAYRITLWTR…NGVITIAMNF (112 aa)).

The protein belongs to the methyltransferase superfamily. RlmKL family.

The protein localises to the cytoplasm. It catalyses the reaction guanosine(2445) in 23S rRNA + S-adenosyl-L-methionine = N(2)-methylguanosine(2445) in 23S rRNA + S-adenosyl-L-homocysteine + H(+). It carries out the reaction guanosine(2069) in 23S rRNA + S-adenosyl-L-methionine = N(2)-methylguanosine(2069) in 23S rRNA + S-adenosyl-L-homocysteine + H(+). Functionally, specifically methylates the guanine in position 2445 (m2G2445) and the guanine in position 2069 (m7G2069) of 23S rRNA. The sequence is that of Ribosomal RNA large subunit methyltransferase K/L from Shewanella sp. (strain ANA-3).